Here is a 126-residue protein sequence, read N- to C-terminus: Large ribosomal subunit protein bL12 (126 aa).

The protein belongs to the bacterial ribosomal protein bL12 family. As to quaternary structure, homodimer. Part of the ribosomal stalk of the 50S ribosomal subunit. Forms a multimeric L10(L12)X complex, where L10 forms an elongated spine to which 2 to 4 L12 dimers bind in a sequential fashion. Binds GTP-bound translation factors.

Its function is as follows. Forms part of the ribosomal stalk which helps the ribosome interact with GTP-bound translation factors. Is thus essential for accurate translation. The polypeptide is Large ribosomal subunit protein bL12 (Legionella pneumophila (strain Paris)).